A 473-amino-acid chain; its full sequence is Putative protein TIC 214 C-terminal part (473 aa).

Belongs to the TIC214 family. As to quaternary structure, part of the Tic complex.

The protein localises to the plastid. It is found in the chloroplast. Functionally, involved in protein precursor import into chloroplasts. May be part of an intermediate translocation complex acting as a protein-conducting channel at the inner envelope. This chain is Putative protein TIC 214 C-terminal part, found in Anthoceros angustus (Hornwort).